We begin with the raw amino-acid sequence, 234 residues long: Purine nucleoside phosphorylase DeoD-type (234 aa).

An a purine D-ribonucleoside-binding site is contributed by His5. Residues Gly21, Arg25, Arg44, and 88–91 (RIGS) contribute to the phosphate site. A purine D-ribonucleoside contacts are provided by residues 180-182 (EME) and 204-205 (SD). Asp205 functions as the Proton donor in the catalytic mechanism.

This sequence belongs to the PNP/UDP phosphorylase family. As to quaternary structure, homohexamer; trimer of homodimers.

The catalysed reaction is a purine D-ribonucleoside + phosphate = a purine nucleobase + alpha-D-ribose 1-phosphate. It catalyses the reaction a purine 2'-deoxy-D-ribonucleoside + phosphate = a purine nucleobase + 2-deoxy-alpha-D-ribose 1-phosphate. Its function is as follows. Catalyzes the reversible phosphorolytic breakdown of the N-glycosidic bond in the beta-(deoxy)ribonucleoside molecules, with the formation of the corresponding free purine bases and pentose-1-phosphate. The polypeptide is Purine nucleoside phosphorylase DeoD-type (Colwellia psychrerythraea (strain 34H / ATCC BAA-681) (Vibrio psychroerythus)).